Consider the following 150-residue polypeptide: uncharacterized protein (150 aa).

This is an uncharacterized protein from Bacillus subtilis (strain 168).